Here is a 118-residue protein sequence, read N- to C-terminus: Small ribosomal subunit protein uS13 (118 aa).

Positions 92–118 (RRSLPVRGQRTKTNARTRKGPRKPIKK) are disordered.

The protein belongs to the universal ribosomal protein uS13 family. In terms of assembly, part of the 30S ribosomal subunit. Forms a loose heterodimer with protein S19. Forms two bridges to the 50S subunit in the 70S ribosome.

Functionally, located at the top of the head of the 30S subunit, it contacts several helices of the 16S rRNA. In the 70S ribosome it contacts the 23S rRNA (bridge B1a) and protein L5 of the 50S subunit (bridge B1b), connecting the 2 subunits; these bridges are implicated in subunit movement. Contacts the tRNAs in the A and P-sites. The sequence is that of Small ribosomal subunit protein uS13 from Acinetobacter baylyi (strain ATCC 33305 / BD413 / ADP1).